Consider the following 96-residue polypeptide: uncharacterized protein (96 aa).

The first 15 residues, 1–15 (MRLFILLVALFVICA), serve as a signal peptide directing secretion.

This is an uncharacterized protein from Caenorhabditis elegans.